An 87-amino-acid chain; its full sequence is Small ribosomal subunit protein bS20 (87 aa).

Positions 1-21 are disordered; it reads MANHKSAEKRARQTIKKTERN.

Belongs to the bacterial ribosomal protein bS20 family.

Its function is as follows. Binds directly to 16S ribosomal RNA. The chain is Small ribosomal subunit protein bS20 from Campylobacter jejuni subsp. jejuni serotype O:23/36 (strain 81-176).